The following is a 617-amino-acid chain: Dihydroxy-acid dehydratase (617 aa).

Asp81 provides a ligand contact to Mg(2+). Cys122 provides a ligand contact to [2Fe-2S] cluster. Residues Asp123 and Lys124 each coordinate Mg(2+). Lys124 is modified (N6-carboxylysine). Cys197 lines the [2Fe-2S] cluster pocket. Glu494 is a Mg(2+) binding site. Catalysis depends on Ser520, which acts as the Proton acceptor.

Belongs to the IlvD/Edd family. Homodimer. [2Fe-2S] cluster is required as a cofactor. Requires Mg(2+) as cofactor.

The enzyme catalyses (2R)-2,3-dihydroxy-3-methylbutanoate = 3-methyl-2-oxobutanoate + H2O. It carries out the reaction (2R,3R)-2,3-dihydroxy-3-methylpentanoate = (S)-3-methyl-2-oxopentanoate + H2O. It participates in amino-acid biosynthesis; L-isoleucine biosynthesis; L-isoleucine from 2-oxobutanoate: step 3/4. It functions in the pathway amino-acid biosynthesis; L-valine biosynthesis; L-valine from pyruvate: step 3/4. In terms of biological role, functions in the biosynthesis of branched-chain amino acids. Catalyzes the dehydration of (2R,3R)-2,3-dihydroxy-3-methylpentanoate (2,3-dihydroxy-3-methylvalerate) into 2-oxo-3-methylpentanoate (2-oxo-3-methylvalerate) and of (2R)-2,3-dihydroxy-3-methylbutanoate (2,3-dihydroxyisovalerate) into 2-oxo-3-methylbutanoate (2-oxoisovalerate), the penultimate precursor to L-isoleucine and L-valine, respectively. The chain is Dihydroxy-acid dehydratase from Parafrankia sp. (strain EAN1pec).